Here is a 611-residue protein sequence, read N- to C-terminus: UvrABC system protein C (611 aa).

The region spanning 6 to 84 (NNPGVYRMFN…IKRSRPRFNV (79 aa)) is the GIY-YIG domain. A UVR domain is found at 194 to 229 (QSVKDHLAAAMQAASADLDFEHAAVYRDRLAALSHV).

It belongs to the UvrC family. As to quaternary structure, interacts with UvrB in an incision complex.

The protein resides in the cytoplasm. In terms of biological role, the UvrABC repair system catalyzes the recognition and processing of DNA lesions. UvrC both incises the 5' and 3' sides of the lesion. The N-terminal half is responsible for the 3' incision and the C-terminal half is responsible for the 5' incision. The protein is UvrABC system protein C of Brucella suis biovar 1 (strain 1330).